The following is a 423-amino-acid chain: Serine--tRNA ligase (423 aa).

229–231 (TAE) serves as a coordination point for L-serine. Residue 258–260 (RRE) participates in ATP binding. Position 281 (Glu-281) interacts with L-serine. ATP is bound at residue 345–348 (EISS). L-serine is bound at residue Ser-379.

It belongs to the class-II aminoacyl-tRNA synthetase family. Type-1 seryl-tRNA synthetase subfamily. In terms of assembly, homodimer. The tRNA molecule binds across the dimer.

It is found in the cytoplasm. The enzyme catalyses tRNA(Ser) + L-serine + ATP = L-seryl-tRNA(Ser) + AMP + diphosphate + H(+). The catalysed reaction is tRNA(Sec) + L-serine + ATP = L-seryl-tRNA(Sec) + AMP + diphosphate + H(+). It functions in the pathway aminoacyl-tRNA biosynthesis; selenocysteinyl-tRNA(Sec) biosynthesis; L-seryl-tRNA(Sec) from L-serine and tRNA(Sec): step 1/1. Its function is as follows. Catalyzes the attachment of serine to tRNA(Ser). Is also able to aminoacylate tRNA(Sec) with serine, to form the misacylated tRNA L-seryl-tRNA(Sec), which will be further converted into selenocysteinyl-tRNA(Sec). In Methanosarcina barkeri (strain Fusaro / DSM 804), this protein is Serine--tRNA ligase (serS1).